A 271-amino-acid chain; its full sequence is Imidazole glycerol phosphate synthase subunit HisF (271 aa).

Residues aspartate 12 and aspartate 136 contribute to the active site.

The protein belongs to the HisA/HisF family. Heterodimer of HisH and HisF.

It localises to the cytoplasm. The catalysed reaction is 5-[(5-phospho-1-deoxy-D-ribulos-1-ylimino)methylamino]-1-(5-phospho-beta-D-ribosyl)imidazole-4-carboxamide + L-glutamine = D-erythro-1-(imidazol-4-yl)glycerol 3-phosphate + 5-amino-1-(5-phospho-beta-D-ribosyl)imidazole-4-carboxamide + L-glutamate + H(+). The protein operates within amino-acid biosynthesis; L-histidine biosynthesis; L-histidine from 5-phospho-alpha-D-ribose 1-diphosphate: step 5/9. Functionally, IGPS catalyzes the conversion of PRFAR and glutamine to IGP, AICAR and glutamate. The HisF subunit catalyzes the cyclization activity that produces IGP and AICAR from PRFAR using the ammonia provided by the HisH subunit. The sequence is that of Imidazole glycerol phosphate synthase subunit HisF from Natronomonas pharaonis (strain ATCC 35678 / DSM 2160 / CIP 103997 / JCM 8858 / NBRC 14720 / NCIMB 2260 / Gabara) (Halobacterium pharaonis).